Reading from the N-terminus, the 91-residue chain is Probable Fe(2+)-trafficking protein (91 aa).

Belongs to the Fe(2+)-trafficking protein family. As to quaternary structure, monomer.

In terms of biological role, could be a mediator in iron transactions between iron acquisition and iron-requiring processes, such as synthesis and/or repair of Fe-S clusters in biosynthetic enzymes. The sequence is that of Probable Fe(2+)-trafficking protein from Klebsiella pneumoniae subsp. pneumoniae (strain ATCC 700721 / MGH 78578).